We begin with the raw amino-acid sequence, 190 residues long: 3-isopropylmalate dehydratase small subunit (190 aa).

The protein belongs to the LeuD family. LeuD type 1 subfamily. As to quaternary structure, heterodimer of LeuC and LeuD.

It catalyses the reaction (2R,3S)-3-isopropylmalate = (2S)-2-isopropylmalate. Its pathway is amino-acid biosynthesis; L-leucine biosynthesis; L-leucine from 3-methyl-2-oxobutanoate: step 2/4. Catalyzes the isomerization between 2-isopropylmalate and 3-isopropylmalate, via the formation of 2-isopropylmaleate. The sequence is that of 3-isopropylmalate dehydratase small subunit from Staphylococcus aureus (strain MRSA252).